Here is a 231-residue protein sequence, read N- to C-terminus: Chalcone--flavanone isomerase (231 aa).

Residues Thr46, Asn112, and Ser189 each contribute to the substrate site.

Belongs to the chalcone isomerase family.

The catalysed reaction is a chalcone = a flavanone.. It participates in secondary metabolite biosynthesis; flavonoid biosynthesis. Its function is as follows. Catalyzes the intramolecular cyclization of bicyclic chalcones into tricyclic (S)-flavanones. Responsible for the isomerization of 4,2',4',6'-tetrahydroxychalcone (also termed chalcone) into naringenin. In Hordeum vulgare (Barley), this protein is Chalcone--flavanone isomerase (CHI).